The following is a 319-amino-acid chain: Cytochrome c biogenesis protein CcsA (319 aa).

The next 5 helical transmembrane spans lie at 14–34 (AFAV…FPQW), 46–66 (AIAN…GGYF), 74–94 (SLFF…SISG), 97–117 (LVGV…ALSL), and 142–162 (VMML…ALLV). Positions 175-201 (SVGTGSFRSRRPEPSLEASTGNGGTTV) are disordered. Residues 191–201 (EASTGNGGTTV) are compositionally biased toward polar residues. 3 consecutive transmembrane segments (helical) span residues 227–247 (MIGL…VWAN), 254–274 (WSWD…AAYL), and 288–308 (AILA…VNLL).

Belongs to the CcmF/CycK/Ccl1/NrfE/CcsA family. May interact with ccs1.

Its subcellular location is the cellular thylakoid membrane. Required during biogenesis of c-type cytochromes (cytochrome c6 and cytochrome f) at the step of heme attachment. The sequence is that of Cytochrome c biogenesis protein CcsA from Thermosynechococcus vestitus (strain NIES-2133 / IAM M-273 / BP-1).